The primary structure comprises 1215 residues: Metabotropic glycine receptor (1215 aa).

An N-terminal signal peptide occupies residues 1-23 (MGAMAYPLLLCLLLAQLGLGAVG). Residues 23 to 66 (GASRDPQGRPDSPRERTPKGKPHAQQPGRASASDSSAPWSRSTD) form a disordered region. Residues 24 to 417 (ASRDPQGRPD…CFVQEDKYLR (394 aa)) lie on the Extracellular side of the membrane. The span at 28–40 (PQGRPDSPRERTP) shows a compositional bias: basic and acidic residues. The span at 52–64 (ASASDSSAPWSRS) shows a compositional bias: low complexity. The segment at 85 to 281 (YLYTGDSHQL…CENGSYKPGW (197 aa)) is cache-like region. N98 and N143 each carry an N-linked (GlcNAc...) asparagine glycan. Cysteines 99 and 272 form a disulfide. Positions 172 and 173 each coordinate glycine. N-linked (GlcNAc...) asparagine glycosylation occurs at N215. Residue E271 participates in glycine binding. N-linked (GlcNAc...) asparagine glycosylation is present at N274. D307 contributes to the glycine binding site. N333 is a glycosylation site (N-linked (GlcNAc...) asparagine). The helical transmembrane segment at 418–439 (LAIISFQALCMLLDFVSMLVVY) threads the bilayer. The Cytoplasmic portion of the chain corresponds to 440-451 (HFRKAKSIRASG). The helical transmembrane segment at 452-474 (LILLETILFGSLLLYFPVVILYF) threads the bilayer. Over 475–478 (EPST) the chain is Extracellular. A helical transmembrane segment spans residues 479–501 (FRCILLRWARLLGFATVYGTVTL). A disulfide bridge links C481 with C573. At 502–525 (KLHRVLKVFLSRTAQRIPYMTGGR) the chain is on the cytoplasmic side. The helical transmembrane segment at 526–547 (VMRMLAVILLVVFWFLIGWTSS) threads the bilayer. Residues 548–576 (VCQNLEKQISLIGQGKTSDHLIFNMCLID) are Extracellular-facing. Residues 577-597 (RWDYMTAVAEFLFLLWGVYLC) traverse the membrane as a helical segment. The Cytoplasmic segment spans residues 598 to 611 (YAVRTVPSAFHEPR). A helical transmembrane segment spans residues 612-633 (YMAVAVHNELIISAIFHTIRFV). Residues 634 to 642 (LASRLQSDW) are Extracellular-facing. The chain crosses the membrane as a helical span at residues 643-664 (MLMLYFAHTHLTVTVTIGLLLI). Residues 665–1215 (PKFSHSSNNP…KEEIWDSFKV (551 aa)) lie on the Cytoplasmic side of the membrane. A phosphoserine mark is found at S694, S705, and S708. A disordered region spans residues 757-999 (RITEIPETVS…LNPGTTQMKD (243 aa)). Basic and acidic residues-rich tracts occupy residues 769-781 (CSKE…DHGT) and 819-828 (STYDHVRDQT). K774 is covalently cross-linked (Glycyl lysine isopeptide (Lys-Gly) (interchain with G-Cter in ubiquitin)). S865 carries the phosphoserine modification. Basic and acidic residues predominate over residues 925–943 (VEERTKSQKPLPKDKETNR). S946 carries the phosphoserine modification. The segment covering 979-998 (QRVNPTTANSDLNPGTTQMK) has biased composition (polar residues). 2 consecutive short sequence motifs (VCPWE motif) follow at residues 1006 to 1010 (VCPWE) and 1071 to 1075 (VCLWE). S1080 bears the Phosphoserine mark. The tract at residues 1117–1164 (SEELPPKAVASKTENENLNQIGHQEKKTSSSEENVRGSYNSSNNFQQP) is disordered. A compositionally biased stretch (basic and acidic residues) spans 1139-1151 (HQEKKTSSSEENV). The span at 1153 to 1164 (GSYNSSNNFQQP) shows a compositional bias: polar residues. The short motif at 1171-1175 (VCPWE) is the VCPWE motif 3 element.

The protein belongs to the G-protein coupled receptor 3 family. In terms of assembly, homodimer. Associates with the RGS7-GNB5 complex, promoting its localization to the cell membrane and regulating its GTPase activator activity. Interacts (via VCPWE motifs) with GNAO1. Interacts with GPC4. Interacts with EGFLAM.

Its subcellular location is the cell membrane. It is found in the postsynaptic cell membrane. It localises to the presynaptic cell membrane. The protein localises to the nucleus. Functionally, metabotropic receptor for glycine that controls synapse formation and function in the brain. Acts as an atypical G-protein coupled receptor that recruits and regulates the RGS7-GNB5 complex instead of activating G proteins. In absence of glycine ligand, promotes the GTPase activator activity of RGS7, increasing the GTPase activity of G protein alpha subunits, thereby driving them into their inactive GDP-bound form. Glycine-binding changes the conformation of the intracellular surface, inhibiting the GTPase activator activity of the RGS7-GNB5 complex, promoting G protein alpha subunits into their active GTP-bound form and regulating cAMP levels. Also able to bind taurine, a compound closely related to glycine, but with a two-fold lower affinity. Glycine receptor-dependent regulation of cAMP controls key ion channels, kinases and neurotrophic factors involved in neuronal excitability and synaptic transmission. Plays a pivotal role in regulating mood and cognition via its ability to regulate neuronal excitability in L2/L3 pyramidal neurons of the prefrontal cortex. Also involved in spatial learning by regulating hippocampal CA1 neuronal excitability. Acts as a synaptic organizer in the hippocampus, required for proper mossy fiber-CA3 neurocircuitry establishment, structure and function: induces presynaptic differentiation in contacting axons via its interaction with GPC4. In addition to glycine, may also act as a receptor for osteocalcin (BGLAP) hormone: osteocalcin-binding initiates a signaling response that prevents neuronal apoptosis in the hippocampus and regulates the synthesis of neurotransmitters. This is Metabotropic glycine receptor from Homo sapiens (Human).